Here is a 188-residue protein sequence, read N- to C-terminus: Protein GrpE (188 aa).

The tract at residues 1–24 is disordered; that stretch reads MSDENKPGEAAELDAGVAPEAQPE.

This sequence belongs to the GrpE family. As to quaternary structure, homodimer.

Its subcellular location is the cytoplasm. Its function is as follows. Participates actively in the response to hyperosmotic and heat shock by preventing the aggregation of stress-denatured proteins, in association with DnaK and GrpE. It is the nucleotide exchange factor for DnaK and may function as a thermosensor. Unfolded proteins bind initially to DnaJ; upon interaction with the DnaJ-bound protein, DnaK hydrolyzes its bound ATP, resulting in the formation of a stable complex. GrpE releases ADP from DnaK; ATP binding to DnaK triggers the release of the substrate protein, thus completing the reaction cycle. Several rounds of ATP-dependent interactions between DnaJ, DnaK and GrpE are required for fully efficient folding. The polypeptide is Protein GrpE (Hyphomonas neptunium (strain ATCC 15444)).